The following is a 692-amino-acid chain: MNRVILKDSKIFLNVLNKPIIKNKNCLSLLNITTSSTTSIIKNQQINQFNKRNFTNTINNNKNENINNKILNIIERSHSCGEITSKDIGKEVIIYGWINSLRNLGDNVFLVIRDGHGKVQCYVDLKQQCILKSSVPNIDINERNSIEENIKLFKLESIVSIKGKVIARPERMVNKNMSTGEIEISVDQLQLLNNCVDLPFTVEHDSTAVSEELRLKYRYVDLRRDKVQSNIRLRSKVAMAARNYLINQQFIEVETPTLFRPTPEGAREYLVPTRHQGQFYSLPQSPQQYKQLLMVGGIDRYFQLARCYRDEDLRSDRQPEFTQIDMELSFVNTQMIYRIIEGLVKTLWKEAGFNIDYEFPFYTYEQVLSTYGIDKPDTRYDMKLVDITDCFNKDETNINLFKNALSQASNNFKESKPVIKCIKLDQVLPTLKSKHLDQITTESNSIITVQIKSNNEWKSLISKSISEQEKTLITERMNLKEGDVLLISVGPRFQVESTLGKTRIYCANLLKELNLLKLDPQQFNFLWVVDFPLFTPSDYMNEQSALLSTHHPFTAPHPEDIDLLLNPLSTPSDYSKIRGQHYDIVINGVELGGGSIRIHNSDVQLRVLEKVLKLEPHMVQRFNHLLTALSMGCPPHGGIALGFDRLCSLLVNSNSIRDVIAFPKTSGGKELMTSSPATVTKSELDELFLIQK.

A mitochondrion-targeting transit peptide spans methionine 1 to asparagine 61. Glutamate 264 serves as a coordination point for L-aspartate. The aspartate stretch occupies residues glutamine 287–lysine 290. Arginine 309 is a binding site for L-aspartate. Residues arginine 309 to glutamate 311 and glutamate 590 contribute to the ATP site. Arginine 597 contributes to the L-aspartate binding site. Glycine 642–arginine 645 contributes to the ATP binding site.

It belongs to the class-II aminoacyl-tRNA synthetase family. Type 1 subfamily.

The protein localises to the mitochondrion matrix. The catalysed reaction is tRNA(Asp) + L-aspartate + ATP = L-aspartyl-tRNA(Asp) + AMP + diphosphate. This is Aspartate--tRNA ligase, mitochondrial (maspS) from Dictyostelium discoideum (Social amoeba).